The following is a 451-amino-acid chain: Phenylalanine--tRNA ligase, mitochondrial (451 aa).

Substrate contacts are provided by residues 157 to 160, Arg179, 186 to 188, and 193 to 195; these read SAHQ, QHY, and QLE. Lys202 is modified (N6-acetyllysine). The substrate site is built by Glu287 and Phe312. Positions 358–450 constitute an FDX-ACB domain; the sequence is SKYPAVINDI…AVQLLGVEGR (93 aa).

It belongs to the class-II aminoacyl-tRNA synthetase family. Monomer.

It is found in the mitochondrion matrix. The protein localises to the mitochondrion. It catalyses the reaction tRNA(Phe) + L-phenylalanine + ATP = L-phenylalanyl-tRNA(Phe) + AMP + diphosphate + H(+). Is responsible for the charging of tRNA(Phe) with phenylalanine in mitochondrial translation. To a lesser extent, also catalyzes direct attachment of m-Tyr (an oxidized version of Phe) to tRNA(Phe), thereby opening the way for delivery of the misacylated tRNA to the ribosome and incorporation of ROS-damaged amino acid into proteins. This Homo sapiens (Human) protein is Phenylalanine--tRNA ligase, mitochondrial (FARS2).